The following is a 426-amino-acid chain: 3-phosphoshikimate 1-carboxyvinyltransferase (426 aa).

3 residues coordinate 3-phosphoshikimate: Lys-22, Ser-23, and Arg-27. Position 22 (Lys-22) interacts with phosphoenolpyruvate. Phosphoenolpyruvate is bound by residues Gly-96 and Arg-124. 3-phosphoshikimate contacts are provided by Ser-170, Ser-171, Gln-172, Ser-198, Asp-314, Asn-337, and Lys-341. Residue Gln-172 participates in phosphoenolpyruvate binding. Asp-314 serves as the catalytic Proton acceptor. Phosphoenolpyruvate contacts are provided by Arg-345, Arg-387, and Lys-412.

This sequence belongs to the EPSP synthase family. In terms of assembly, monomer.

The protein localises to the cytoplasm. The enzyme catalyses 3-phosphoshikimate + phosphoenolpyruvate = 5-O-(1-carboxyvinyl)-3-phosphoshikimate + phosphate. It functions in the pathway metabolic intermediate biosynthesis; chorismate biosynthesis; chorismate from D-erythrose 4-phosphate and phosphoenolpyruvate: step 6/7. In terms of biological role, catalyzes the transfer of the enolpyruvyl moiety of phosphoenolpyruvate (PEP) to the 5-hydroxyl of shikimate-3-phosphate (S3P) to produce enolpyruvyl shikimate-3-phosphate and inorganic phosphate. The chain is 3-phosphoshikimate 1-carboxyvinyltransferase from Shewanella sp. (strain W3-18-1).